A 750-amino-acid polypeptide reads, in one-letter code: Photosystem I P700 chlorophyll a apoprotein A1 (750 aa).

8 helical membrane passes run 70–93, 156–179, 195–219, 291–309, 346–369, 385–411, 433–455, and 531–549; these read VFSA…FHGA, LYCT…FHYH, LNHH…HVSL, IIHH…GHMY, WHAQ…HHMY, LSLF…IFMV, AIIS…LYIH, and FLVH…LILL. Cys573 and Cys582 together coordinate [4Fe-4S] cluster. The next 2 membrane-spanning stretches (helical) occupy residues 589–610 and 664–686; these read HVFL…HFSW and LSAY…MFLF. Residue His675 participates in chlorophyll a' binding. Met683 and Tyr691 together coordinate chlorophyll a. Trp692 contacts phylloquinone. The chain crosses the membrane as a helical span at residues 724–744; the sequence is AVGVTHYLLGGIATTWAFFLA.

It belongs to the PsaA/PsaB family. The PsaA/B heterodimer binds the P700 chlorophyll special pair and subsequent electron acceptors. PSI consists of a core antenna complex that captures photons, and an electron transfer chain that converts photonic excitation into a charge separation. The eukaryotic PSI reaction center is composed of at least 11 subunits. The cofactor is P700 is a chlorophyll a/chlorophyll a' dimer, A0 is one or more chlorophyll a, A1 is one or both phylloquinones and FX is a shared 4Fe-4S iron-sulfur center..

The protein localises to the plastid. It localises to the chloroplast thylakoid membrane. The catalysed reaction is reduced [plastocyanin] + hnu + oxidized [2Fe-2S]-[ferredoxin] = oxidized [plastocyanin] + reduced [2Fe-2S]-[ferredoxin]. PsaA and PsaB bind P700, the primary electron donor of photosystem I (PSI), as well as the electron acceptors A0, A1 and FX. PSI is a plastocyanin-ferredoxin oxidoreductase, converting photonic excitation into a charge separation, which transfers an electron from the donor P700 chlorophyll pair to the spectroscopically characterized acceptors A0, A1, FX, FA and FB in turn. Oxidized P700 is reduced on the lumenal side of the thylakoid membrane by plastocyanin. The sequence is that of Photosystem I P700 chlorophyll a apoprotein A1 from Phaseolus vulgaris (Kidney bean).